The following is a 91-amino-acid chain: ATP synthase subunit c 1 (91 aa).

The next 2 membrane-spanning stretches (helical) occupy residues 4–24 (FTMC…GTAI) and 53–73 (IGLA…LIIL).

Belongs to the ATPase C chain family. F-type ATPases have 2 components, F(1) - the catalytic core - and F(0) - the membrane proton channel. F(1) has five subunits: alpha(3), beta(3), gamma(1), delta(1), epsilon(1). F(0) has three main subunits: a(1), b(2) and c(10-14). The alpha and beta chains form an alternating ring which encloses part of the gamma chain. F(1) is attached to F(0) by a central stalk formed by the gamma and epsilon chains, while a peripheral stalk is formed by the delta and b chains.

It localises to the cell inner membrane. In terms of biological role, f(1)F(0) ATP synthase produces ATP from ADP in the presence of a proton or sodium gradient. F-type ATPases consist of two structural domains, F(1) containing the extramembraneous catalytic core and F(0) containing the membrane proton channel, linked together by a central stalk and a peripheral stalk. During catalysis, ATP synthesis in the catalytic domain of F(1) is coupled via a rotary mechanism of the central stalk subunits to proton translocation. Key component of the F(0) channel; it plays a direct role in translocation across the membrane. A homomeric c-ring of between 10-14 subunits forms the central stalk rotor element with the F(1) delta and epsilon subunits. This Pelobacter propionicus (strain DSM 2379 / NBRC 103807 / OttBd1) protein is ATP synthase subunit c 1.